The sequence spans 230 residues: Lipoprotein-releasing system ATP-binding protein LolD (230 aa).

One can recognise an ABC transporter domain in the interval 6 to 230; sequence LQVQAVSKSY…GYLQVPESAQ (225 aa). Position 42-49 (42-49) interacts with ATP; it reads GTSGSGKS.

It belongs to the ABC transporter superfamily. Lipoprotein translocase (TC 3.A.1.125) family. In terms of assembly, the complex is composed of two ATP-binding proteins (LolD) and two transmembrane proteins (LolC and LolE).

The protein localises to the cell inner membrane. Functionally, part of the ABC transporter complex LolCDE involved in the translocation of mature outer membrane-directed lipoproteins, from the inner membrane to the periplasmic chaperone, LolA. Responsible for the formation of the LolA-lipoprotein complex in an ATP-dependent manner. The sequence is that of Lipoprotein-releasing system ATP-binding protein LolD from Shewanella oneidensis (strain ATCC 700550 / JCM 31522 / CIP 106686 / LMG 19005 / NCIMB 14063 / MR-1).